Here is a 578-residue protein sequence, read N- to C-terminus: Adenine deaminase (578 aa).

Belongs to the metallo-dependent hydrolases superfamily. Adenine deaminase family. Requires Mn(2+) as cofactor.

The enzyme catalyses adenine + H2O + H(+) = hypoxanthine + NH4(+). This chain is Adenine deaminase, found in Ligilactobacillus salivarius (strain UCC118) (Lactobacillus salivarius).